A 251-amino-acid chain; its full sequence is Plant UBX domain-containing protein 1 (251 aa).

M1 is subject to N-acetylmethionine. Residues 104-180 (SKLTKAVIRV…GFVPGAIVYF (77 aa)) form the UBX domain. Residues 212 to 251 (AVEPVESSSEPATVDSSAVPVEHERKSTEKKTTKPKWFKM) are disordered. Polar residues predominate over residues 217–227 (ESSSEPATVDS). Residues 232–243 (VEHERKSTEKKT) show a composition bias toward basic and acidic residues.

As to quaternary structure, interacts with CDC48A (non-hexameric) via its UBX-containing C-terminal domain.

Its subcellular location is the cytoplasm. Regulates CDC48A by inhibiting its ATPase activity and by promoting the disassembly of the active hexamer. The chain is Plant UBX domain-containing protein 1 from Arabidopsis thaliana (Mouse-ear cress).